A 330-amino-acid polypeptide reads, in one-letter code: Erlin-2-B (330 aa).

Residues 1 to 2 (MS) lie on the Cytoplasmic side of the membrane. The chain crosses the membrane as a helical span at residues 3–23 (HAGAIAALGVALIAAALFSAI). Residues 24 to 330 (HKIEEGHVGV…NEPAAAEELK (307 aa)) lie on the Lumenal side of the membrane. An N-linked (GlcNAc...) asparagine glycan is attached at asparagine 106. The segment at 308–330 (SSSAGPRVQSAKRNEPAAAEELK) is disordered. Residues 319–330 (KRNEPAAAEELK) show a composition bias toward basic and acidic residues.

The protein belongs to the band 7/mec-2 family.

It localises to the endoplasmic reticulum membrane. Functionally, mediates the endoplasmic reticulum-associated degradation (ERAD) of inositol 1,4,5-trisphosphate receptors (IP3Rs). Promotes sterol-accelerated ERAD of HMGCR. Involved in regulation of cellular cholesterol homeostasis by regulation the SREBP signaling pathway. The chain is Erlin-2-B (erlin2-b) from Xenopus laevis (African clawed frog).